We begin with the raw amino-acid sequence, 274 residues long: Ribose-5-phosphate isomerase (274 aa).

This sequence belongs to the ribose 5-phosphate isomerase family.

It is found in the cytoplasm. The catalysed reaction is aldehydo-D-ribose 5-phosphate = D-ribulose 5-phosphate. Its pathway is carbohydrate degradation; pentose phosphate pathway; D-ribose 5-phosphate from D-ribulose 5-phosphate (non-oxidative stage): step 1/1. This Schizosaccharomyces pombe (strain 972 / ATCC 24843) (Fission yeast) protein is Ribose-5-phosphate isomerase (rki1).